Here is a 148-residue protein sequence, read N- to C-terminus: Large ribosomal subunit protein uL22c (148 aa).

Belongs to the universal ribosomal protein uL22 family. Part of the 50S ribosomal subunit.

It is found in the plastid. The protein localises to the chloroplast. This protein binds specifically to 23S rRNA. In terms of biological role, the globular domain of the protein is located near the polypeptide exit tunnel on the outside of the subunit, while an extended beta-hairpin is found that lines the wall of the exit tunnel in the center of the 70S ribosome. This Zea mays (Maize) protein is Large ribosomal subunit protein uL22c (rpl22).